We begin with the raw amino-acid sequence, 659 residues long: WD repeat-containing protein 48 homolog (659 aa).

8 WD repeats span residues 27–66, 73–112, 115–154, 166–205, 208–247, 250–289, 292–331, and 337–376; these read RHRN…SQEP, HHND…CMST, THRD…ALTA, GSKD…KIAK, GHAE…CVQT, VHSE…NSVL, EERA…KLSF, and KGGA…KVED. Residues 592–613 are disordered; that stretch reads ASTGNSNSSQNNSQSDANSEGS. The span at 596 to 610 shows a compositional bias: low complexity; the sequence is NSNSSQNNSQSDANS.

This sequence belongs to the WD repeat WDR48 family. In terms of assembly, catalytic component of the Usp12-46 deubiquitylase complex consisting of Usp12-46, Wdr20 and Uaf1; regulatory subunit that, together wtih Wdr20, stabilizes Usp12-46. The Usp12-46 deubiquitylase complex associates with arr/arrow; the interaction leads to deubiquitination and stabilization of arr/arrow.

Regulatory component of the Usp12-46 deubiquitylase complex. activates deubiquitination by increasing the catalytic turnover without increasing the affinity of deubiquitinating enzymes for the substrate. The complex deubiquitylates the wg/wingless-signaling receptor arr/arrow, which stabilizes the receptor and increases its concentration at the cell surface; this enhances the sensitivity of cells to wg/wingless-signal stimulation. This increases the amplitude and spatial range of the signaling response to the wg/wingless morphogen gradient, facilitating the precise concentration-dependent regulation of its target genes. Together with Wdr20 and Usp12-46 required for wg/wingless-mediated signaling in the wing imaginal disc and for wg/wingless-dependent regulation of intestinal stem cell proliferation. The polypeptide is WD repeat-containing protein 48 homolog (Aedes aegypti (Yellowfever mosquito)).